A 32-amino-acid chain; its full sequence is Yop proteins translocation protein A (32 aa).

The protein is Yop proteins translocation protein A (yscA) of Yersinia enterocolitica serotype O:8 / biotype 1B (strain NCTC 13174 / 8081).